A 355-amino-acid chain; its full sequence is UDP-N-acetylglucosamine--N-acetylmuramyl-(pentapeptide) pyrophosphoryl-undecaprenol N-acetylglucosamine transferase (355 aa).

UDP-N-acetyl-alpha-D-glucosamine is bound by residues 15 to 17, asparagine 127, arginine 163, serine 191, isoleucine 244, 263 to 268, and glutamine 288; these read TGG and ALTVSE.

Belongs to the glycosyltransferase 28 family. MurG subfamily.

It is found in the cell inner membrane. The enzyme catalyses di-trans,octa-cis-undecaprenyl diphospho-N-acetyl-alpha-D-muramoyl-L-alanyl-D-glutamyl-meso-2,6-diaminopimeloyl-D-alanyl-D-alanine + UDP-N-acetyl-alpha-D-glucosamine = di-trans,octa-cis-undecaprenyl diphospho-[N-acetyl-alpha-D-glucosaminyl-(1-&gt;4)]-N-acetyl-alpha-D-muramoyl-L-alanyl-D-glutamyl-meso-2,6-diaminopimeloyl-D-alanyl-D-alanine + UDP + H(+). The protein operates within cell wall biogenesis; peptidoglycan biosynthesis. Functionally, cell wall formation. Catalyzes the transfer of a GlcNAc subunit on undecaprenyl-pyrophosphoryl-MurNAc-pentapeptide (lipid intermediate I) to form undecaprenyl-pyrophosphoryl-MurNAc-(pentapeptide)GlcNAc (lipid intermediate II). In Escherichia coli O139:H28 (strain E24377A / ETEC), this protein is UDP-N-acetylglucosamine--N-acetylmuramyl-(pentapeptide) pyrophosphoryl-undecaprenol N-acetylglucosamine transferase.